The primary structure comprises 421 residues: Testin (421 aa).

The region spanning 92–199 (MILTNPVAAK…GDVKLPCEMD (108 aa)) is the PET domain. A disordered region spans residues 133-164 (EKQPVAGSEGAQYRKKQLAKQLPAHDQDPSKC). Residues 155-164 (PAHDQDPSKC) show a composition bias toward basic and acidic residues. 3 consecutive LIM zinc-binding domains span residues 234 to 297 (YSCY…CDSE), 299 to 359 (PRCA…NHAV), and 362 to 421 (QGCH…KMMS).

The protein belongs to the prickle / espinas / testin family. As to quaternary structure, interacts via LIM domain 1 with ZYX. Interacts (via LIM domain 3) with ENAH and VASP. Interacts with ALKBH4, talin, actin, alpha-actinin, GRIP1 and PXN. Interacts (via LIM domain 2) with ACTL7A (via N-terminus). Heterodimer with ACTL7A; the heterodimer interacts with ENAH to form a heterotrimer.

It is found in the cytoplasm. Its subcellular location is the cell junction. It localises to the focal adhesion. In terms of biological role, scaffold protein that may play a role in cell adhesion, cell spreading and in the reorganization of the actin cytoskeleton. Plays a role in the regulation of cell proliferation. May act as a tumor suppressor. This Callithrix jacchus (White-tufted-ear marmoset) protein is Testin (TES).